The primary structure comprises 148 residues: Small ribosomal subunit protein eS12B (148 aa).

Belongs to the eukaryotic ribosomal protein eS12 family. In terms of assembly, component of the small ribosomal subunit (SSU). Mature yeast ribosomes consist of a small (40S) and a large (60S) subunit. The 40S small subunit contains 1 molecule of ribosomal RNA (18S rRNA) and at least 33 different proteins. The large 60S subunit contains 3 rRNA molecules (25S, 5.8S and 5S rRNA) and at least 46 different proteins.

It is found in the cytoplasm. In terms of biological role, component of the ribosome, a large ribonucleoprotein complex responsible for the synthesis of proteins in the cell. The small ribosomal subunit (SSU) binds messenger RNAs (mRNAs) and translates the encoded message by selecting cognate aminoacyl-transfer RNA (tRNA) molecules. The large subunit (LSU) contains the ribosomal catalytic site termed the peptidyl transferase center (PTC), which catalyzes the formation of peptide bonds, thereby polymerizing the amino acids delivered by tRNAs into a polypeptide chain. The nascent polypeptides leave the ribosome through a tunnel in the LSU and interact with protein factors that function in enzymatic processing, targeting, and the membrane insertion of nascent chains at the exit of the ribosomal tunnel. The chain is Small ribosomal subunit protein eS12B (rps1202) from Schizosaccharomyces pombe (strain 972 / ATCC 24843) (Fission yeast).